Consider the following 435-residue polypeptide: Adenylosuccinate synthetase (435 aa).

GTP is bound by residues 17–23 (GDEGKGK) and 45–47 (GHT). Aspartate 18 functions as the Proton acceptor in the catalytic mechanism. Residues aspartate 18 and glycine 45 each contribute to the Mg(2+) site. IMP is bound by residues 18–21 (DEGK), 43–46 (NAGH), threonine 134, arginine 148, glutamine 229, threonine 244, and arginine 308. Catalysis depends on histidine 46, which acts as the Proton donor. Residue 304–310 (SVTGRPR) coordinates substrate. Residues arginine 310, 336 to 338 (KLD), and 418 to 420 (STG) contribute to the GTP site.

The protein belongs to the adenylosuccinate synthetase family. As to quaternary structure, homodimer. Requires Mg(2+) as cofactor.

It localises to the cytoplasm. The catalysed reaction is IMP + L-aspartate + GTP = N(6)-(1,2-dicarboxyethyl)-AMP + GDP + phosphate + 2 H(+). It functions in the pathway purine metabolism; AMP biosynthesis via de novo pathway; AMP from IMP: step 1/2. Functionally, plays an important role in the de novo pathway of purine nucleotide biosynthesis. Catalyzes the first committed step in the biosynthesis of AMP from IMP. The chain is Adenylosuccinate synthetase from Bordetella pertussis (strain Tohama I / ATCC BAA-589 / NCTC 13251).